The following is a 388-amino-acid chain: Glutamate 5-kinase (388 aa).

Lys21 is an ATP binding site. Ser61, Asp148, and Asn160 together coordinate substrate. ATP is bound by residues 180–181 and 222–228; these read TD and TGGMITK. In terms of domain architecture, PUA spans 285–363; the sequence is RGSVFLDPGA…RWLARELGAE (79 aa).

This sequence belongs to the glutamate 5-kinase family.

The protein resides in the cytoplasm. It catalyses the reaction L-glutamate + ATP = L-glutamyl 5-phosphate + ADP. Its pathway is amino-acid biosynthesis; L-proline biosynthesis; L-glutamate 5-semialdehyde from L-glutamate: step 1/2. Its function is as follows. Catalyzes the transfer of a phosphate group to glutamate to form L-glutamate 5-phosphate. The chain is Glutamate 5-kinase from Thermobifida fusca (strain YX).